The sequence spans 580 residues: Alpha-thujene synthase, chloroplastic (580 aa).

The transit peptide at 1 to 32 directs the protein to the chloroplast; sequence MALQLLTPSFSFQHSPSPHKLTTLRYTHHRIR. Residues Arg296, Asp333, Asp337, Arg473, and Asp476 each contribute to the (2E)-geranyl diphosphate site. Residues Asp333 and Asp337 each contribute to the Mg(2+) site. Residues 333-337 carry the DDXXD motif motif; it reads DDVYD. Mg(2+)-binding residues include Asp476, Thr480, and Glu484.

The protein belongs to the terpene synthase family. Tpsb subfamily. In terms of assembly, monomer. Mg(2+) serves as cofactor. Mn(2+) is required as a cofactor. In terms of tissue distribution, expressed in developing and mature fruits. Barely detectable in leaves and shoots.

Its subcellular location is the plastid. The protein resides in the chloroplast. It carries out the reaction (2E)-geranyl diphosphate = alpha-thujene + diphosphate. It participates in secondary metabolite biosynthesis; terpenoid biosynthesis. In terms of biological role, monoterpene synthase (TPS) involved in the biosynthesis of monoterpene natural products used by traditional Chinese medicine to treat headache, inflammation and intoxication. Catalyzes the conversion of (2E)-geranyl diphosphate (GPP) into alpha-thujene. The chain is Alpha-thujene synthase, chloroplastic from Litsea cubeba (Aromatic litsea).